The following is a 135-amino-acid chain: Large ribosomal subunit protein mL41 (135 aa).

The transit peptide at 1–13 (MGVLSALARGFVR) directs the protein to the mitochondrion.

The protein belongs to the mitochondrion-specific ribosomal protein mL41 family. As to quaternary structure, component of the mitochondrial ribosome large subunit (39S) which comprises a 16S rRNA and about 50 distinct proteins.

Its subcellular location is the mitochondrion. In terms of biological role, component of the mitochondrial ribosome large subunit. Also involved in apoptosis and cell cycle. The chain is Large ribosomal subunit protein mL41 (mrpl41) from Danio rerio (Zebrafish).